Consider the following 1464-residue polypeptide: Secretory phospholipase A2 receptor (1464 aa).

The signal sequence occupies residues 1-22 (MLLSPSLLLPLLLLLGAPRGCA). Topologically, residues 23–1398 (EGVAAALTPE…ELPEKGPSHS (1376 aa)) are extracellular. In terms of domain architecture, Ricin B-type lectin spans 40 to 163 (KGIFVIQSES…GSGGGDICEY (124 aa)). 17 cysteine pairs are disulfide-bonded: Cys53–Cys66, Cys91–Cys108, Cys180–Cys206, Cys194–Cys221, Cys262–Cys356, Cys332–Cys348, Cys408–Cys503, Cys480–Cys495, Cys619–Cys636, Cys701–Cys798, Cys776–Cys790, Cys842–Cys939, Cys916–Cys931, Cys1069–Cys1089, Cys1211–Cys1225, Cys1282–Cys1378, and Cys1356–Cys1370. An N-linked (GlcNAc...) asparagine glycan is attached at Asn95. The Fibronectin type-II domain maps to 175 to 223 (AHGMPCMFPFQYNHQWHHECTREGREDDLLWCATTSRYERDEKWGFCPD). C-type lectin domains lie at 240-357 (NSHI…YVCK), 387-504 (YNRN…YVCK), 524-645 (HGGF…MSLC), 675-799 (GLAS…WICK), 821-940 (YQDA…SICK), 967-1098 (FNYK…GFVC), 1123-1234 (YGNR…GAIC), and 1259-1379 (FKSN…FICK). The N-linked (GlcNAc...) asparagine glycan is linked to Asn456. A helical membrane pass occupies residues 1399–1419 (IIPLAVVLTLIVIVAICTLSF). Topologically, residues 1420-1464 (CIYKHNGGFFRRLAGFRNPYYPATNFSTVHLEENILISDLEKSDQ) are cytoplasmic. The short motif at 1437-1443 (NPYYPAT) is the Endocytosis signal element.

In terms of assembly, interacts with sPLA2-IB/PLA2G1B; this interaction mediates intracellular signaling as well as clearance of extracellular sPLA2-IB/PLA2G1B via endocytotic pathway. Interacts with sPLA2-X/PLA2G10; this interaction mediates sPLA2-X/PLA2G10 clearance and inactivation. In terms of processing, the secretory phospholipase A2 receptor form may be produced by the action of metalloproteinases. It contains all extracellular domains and only lacks transmembrane and cytosolic regions. It is however unclear whether this form is produced by proteolytic cleavage as suggested by some experiments, or by alternative splicing.

The protein localises to the cell membrane. The protein resides in the secreted. Functionally, receptor for secretory phospholipase A2 (sPLA2). Also able to bind to snake PA2-like toxins. Although its precise function remains unclear, binding of sPLA2 to its receptor participates in both positive and negative regulation of sPLA2 functions as well as clearance of sPLA2. Binding of sPLA2-IB/PLA2G1B induces various effects depending on the cell type, such as activation of the mitogen-activated protein kinase (MAPK) cascade to induce cell proliferation, the production of lipid mediators, selective release of arachidonic acid in bone marrow-derived mast cells. In neutrophils, binding of sPLA2-IB/PLA2G1B can activate p38 MAPK to stimulate elastase release and cell adhesion. May be involved in responses in pro-inflammatory cytokine productions during endotoxic shock. Also has endocytic properties and rapidly internalizes sPLA2 ligands, which is particularly important for the clearance of extracellular sPLA2s to protect their potent enzymatic activities. The soluble secretory phospholipase A2 receptor form is circulating and acts as a negative regulator of sPLA2 functions by blocking the biological functions of sPLA2-IB/PLA2G1B and sPLA2-X/PLA2G10. The chain is Secretory phospholipase A2 receptor (PLA2R1) from Pongo abelii (Sumatran orangutan).